Consider the following 241-residue polypeptide: 2-C-methyl-D-erythritol 4-phosphate cytidylyltransferase (241 aa).

This sequence belongs to the IspD/TarI cytidylyltransferase family. IspD subfamily.

It carries out the reaction 2-C-methyl-D-erythritol 4-phosphate + CTP + H(+) = 4-CDP-2-C-methyl-D-erythritol + diphosphate. It functions in the pathway isoprenoid biosynthesis; isopentenyl diphosphate biosynthesis via DXP pathway; isopentenyl diphosphate from 1-deoxy-D-xylulose 5-phosphate: step 2/6. Catalyzes the formation of 4-diphosphocytidyl-2-C-methyl-D-erythritol from CTP and 2-C-methyl-D-erythritol 4-phosphate (MEP). This chain is 2-C-methyl-D-erythritol 4-phosphate cytidylyltransferase, found in Shewanella denitrificans (strain OS217 / ATCC BAA-1090 / DSM 15013).